Here is a 1131-residue protein sequence, read N- to C-terminus: DNA polymerase II large subunit (1131 aa).

It belongs to the archaeal DNA polymerase II family. As to quaternary structure, heterodimer of a large subunit and a small subunit.

It catalyses the reaction DNA(n) + a 2'-deoxyribonucleoside 5'-triphosphate = DNA(n+1) + diphosphate. The catalysed reaction is Exonucleolytic cleavage in the 3'- to 5'-direction to yield nucleoside 5'-phosphates.. In terms of biological role, possesses two activities: a DNA synthesis (polymerase) and an exonucleolytic activity that degrades single-stranded DNA in the 3'- to 5'-direction. Has a template-primer preference which is characteristic of a replicative DNA polymerase. This Methanococcus vannielii (strain ATCC 35089 / DSM 1224 / JCM 13029 / OCM 148 / SB) protein is DNA polymerase II large subunit.